A 293-amino-acid chain; its full sequence is Deubiquitinase OTUD6B (293 aa).

N-acetylmethionine is present on Met1. In terms of domain architecture, OTU spans 147–284; the sequence is LEIKQIPSDG…GEHYNSVTRL (138 aa). The cys-loop stretch occupies residues 152–158; it reads IPSDGHC. Asp155 is a catalytic residue. The active-site Nucleophile is Cys158. A variable-loop region spans residues 219-229; sequence IVNTAAWGGQL. The his-loop stretch occupies residues 267 to 277; that stretch reads YMRHAYGLGEH. His277 is an active-site residue.

In terms of assembly, interacts with the eukaryotic translation initiation factor 4F complex.

The catalysed reaction is Thiol-dependent hydrolysis of ester, thioester, amide, peptide and isopeptide bonds formed by the C-terminal Gly of ubiquitin (a 76-residue protein attached to proteins as an intracellular targeting signal).. Its function is as follows. Deubiquitinating enzyme that may play a role in the ubiquitin-dependent regulation of protein synthesis, downstream of mTORC1. May associate with the protein synthesis initiation complex and modify its ubiquitination to repress translation. May also repress DNA synthesis and modify different cellular targets thereby regulating cell growth and proliferation. May also play a role in proteasome assembly and function. Functionally, stimulates protein synthesis. Influences the expression of CCND1/cyclin D1 by promoting its translation and regulates MYC/c-Myc protein stability. The chain is Deubiquitinase OTUD6B from Homo sapiens (Human).